A 78-amino-acid polypeptide reads, in one-letter code: Large ribosomal subunit protein bL28 (78 aa).

Residues 1-29 (MSAHCQVTGRQPSFGKSVSHSHRRTSRRW) form a disordered region.

The protein belongs to the bacterial ribosomal protein bL28 family.

The sequence is that of Large ribosomal subunit protein bL28 from Corynebacterium efficiens (strain DSM 44549 / YS-314 / AJ 12310 / JCM 11189 / NBRC 100395).